The chain runs to 637 residues: Early transcription factor 70 kDa subunit (637 aa).

A Helicase ATP-binding domain is found at 32–185 (RTIIDENRSV…GHIIDLMSEE (154 aa)). ATP is bound at residue 45–52 (HIMGSGKT). The DEXH box motif lies at 135–138 (DKAH). The Helicase C-terminal domain occupies 327–507 (KFKYFINRIQ…VLPFDIKKLL (181 aa)).

This sequence belongs to the helicase family. VETF subfamily. Heterodimer of a 70 kDa and a 82 kDa subunit. Part of the early transcription complex composed of ETF, RAP94/OPG109, and the DNA-directed RNA polymerase.

The protein localises to the virion. Its function is as follows. Acts with RNA polymerase to initiate transcription from early gene promoters. Is recruited by the RPO-associated protein of 94 kDa RAP94/OPG109 to form the early transcription complex, which also contains the core RNA polymerase. ETF heterodimer binds to early gene promoters. This chain is Early transcription factor 70 kDa subunit (OPG118), found in Homo sapiens (Human).